A 263-amino-acid chain; its full sequence is MITFLPLLLGLSLGCTGAGGFVAHVESTCLLDDAGTPKDFTYCISFNKDLLTCWDPEENKMAPCEFGVLNSLANVLSQHLNQKDTLMQRLRNGLQNCATHTQPFWGSLTNRTRPPSVQVAKTTPFNTREPVMLACYVWGFYPAEVTITWRKNGKLVMPHSSAHKTAQPNGDWTYQTLSHLALTPSYGDTYTCVVEHTGAPEPILRDWTPGLSPMQTLKVSVSAVTLGLGLIIFSLGVISWRRAGHSSYTPLPGSNYSEGWHIS.

The signal sequence occupies residues 1 to 18 (MITFLPLLLGLSLGCTGA). The interval 19 to 112 (GGFVAHVEST…PFWGSLTNRT (94 aa)) is beta-1. Residues 19 to 218 (GGFVAHVEST…PGLSPMQTLK (200 aa)) are Lumenal-facing. 2 disulfides stabilise this stretch: Cys-29–Cys-97 and Cys-43–Cys-53. Asn-110 carries an N-linked (GlcNAc...) asparagine glycan. A beta-2 region spans residues 113–207 (RPPSVQVAKT…GAPEPILRDW (95 aa)). Residues 114–208 (PPSVQVAKTT…APEPILRDWT (95 aa)) enclose the Ig-like C1-type domain. Residues Cys-135 and Cys-192 are joined by a disulfide bond. The segment at 208 to 218 (TPGLSPMQTLK) is connecting peptide. Residues 219–239 (VSVSAVTLGLGLIIFSLGVIS) form a helical membrane-spanning segment. The Cytoplasmic portion of the chain corresponds to 240 to 263 (WRRAGHSSYTPLPGSNYSEGWHIS). Residues 248–251 (YTPL) carry the YXXZ motif motif.

The protein belongs to the MHC class II family. In terms of assembly, heterodimer of an alpha chain (DMA) and a beta chain (DMB). Interacts with MHCII; this interaction mediates rapid selection of high-affinity peptides in a pH-dependent manner, with an optimum at pH 5.5.

The protein resides in the late endosome membrane. The protein localises to the lysosome membrane. Functionally, plays a critical role in catalyzing the release of class II-associated invariant chain peptide (CLIP) from newly synthesized MHC class II molecules and freeing the peptide binding site for acquisition of antigenic peptides. In B-cells, the interaction between HLA-DM and MHC class II molecules is regulated by HLA-DO. In Homo sapiens (Human), this protein is HLA class II histocompatibility antigen, DM beta chain (HLA-DMB).